Reading from the N-terminus, the 322-residue chain is Lung adenoma susceptibility protein 2 homolog (322 aa).

The signal sequence occupies residues 1–31; that stretch reads MAKSKTKHRLCSRESSVSSLLASCSLSDSNS. A compositionally biased stretch (basic residues) spans 148 to 157; that stretch reads TNKKNKKCHG. Disordered regions lie at residues 148-175 and 228-248; these read TNKK…GPST and FKSP…RAKS. Ser161 bears the Phosphoserine mark. Over residues 236 to 247 the composition is skewed to polar residues; sequence SDDSPQQTSRAK.

The protein resides in the secreted. Functionally, might play a role in cell proliferation. The sequence is that of Lung adenoma susceptibility protein 2 homolog (LAS2) from Macaca fascicularis (Crab-eating macaque).